A 184-amino-acid polypeptide reads, in one-letter code: MIWRSEHIWIELIVGSRKISNFCWAFLLFLGSLGFVLVGTSSYLGKNLISLVSSQQIHFFPQGLVMSFYGIAGLFISSYLWCTISWNVGSGYDRFDRKEGIVCIFRWGFPGKNRRIFLRFRMKDIQSIRIEVKEGIYARRVLYMEIKGQGAIPLTRSDDNLTLREIEQKAAELAYFLRVPIEVF.

The next 2 helical transmembrane spans lie at 19–39 (ISNF…VLVG) and 64–84 (LVMS…WCTI).

The protein belongs to the Ycf4 family.

Its subcellular location is the plastid. The protein resides in the chloroplast thylakoid membrane. Its function is as follows. Seems to be required for the assembly of the photosystem I complex. The chain is Photosystem I assembly protein Ycf4 from Oenothera elata subsp. hookeri (Hooker's evening primrose).